We begin with the raw amino-acid sequence, 906 residues long: Cadherin-2 (906 aa).

An N-terminal signal peptide occupies residues Met1–Ala25. Residues Ser26–Arg159 constitute a propeptide that is removed on maturation. 2 positions are modified to phosphoserine: Ser96 and Ser135. Cadherin domains are found at residues Asp160–Phe267, Leu268–Phe382, Thr383–Phe497, Ala498–Pro603, and Gln604–Arg714. Residues Asp160–Ala724 lie on the Extracellular side of the membrane. Glu170 contacts Ca(2+). Asn190 carries N-linked (GlcNAc...) asparagine glycosylation. Residues Asp226, Glu228, Asp259, Met260, Asn261, Asp262, and Asn263 each contribute to the Ca(2+) site. Asn273 carries an N-linked (GlcNAc...) asparagine glycan. Residues Asp293, Asp295, and Asn301 each contribute to the Ca(2+) site. Asn325 carries N-linked (GlcNAc...) asparagine glycosylation. Asp353 lines the Ca(2+) pocket. Residues Asn402, Asn572, Asn622, Asn651, and Asn692 are each glycosylated (N-linked (GlcNAc...) asparagine). A helical transmembrane segment spans residues Ile725–Trp745. The Cytoplasmic portion of the chain corresponds to Met746–Asp906. A compositionally biased stretch (low complexity) spans Ser863 to Gly880. Residues Ser863–Tyr884 are disordered.

In terms of assembly, homodimer (via extracellular region). Can also form heterodimers with other cadherins (via extracellular region). Dimerization occurs in trans, i.e. with a cadherin chain from another cell. Interacts with CDCP1. Interacts with PCDH8; this complex may also include TAOK2. The interaction with PCDH8 may lead to internalization through TAOK2/p38 MAPK pathway. Identified in a complex containing FGFR4, NCAM1, CDH2, PLCG1, FRS2, SRC, SHC1, GAP43 and CTTN. May interact with OBSCN (via protein kinase domain 2). Interacts with FBXO45. Post-translationally, cleaved by MMP24. Ectodomain cleavage leads to the generation of a soluble 90 kDa N-terminal soluble fragment and a 45 kDa membrane-bound C-terminal fragment 1 (CTF1), which is further cleaved by gamma-secretase into a 35 kDa. Cleavage in neural stem cells by MMP24 affects CDH2-mediated anchorage of neural stem cells to ependymocytes in the adult subependymal zone, leading to modulate neural stem cell quiescence. In terms of processing, may be phosphorylated by OBSCN.

It is found in the cell membrane. Its subcellular location is the sarcolemma. It localises to the cell junction. The protein resides in the cell surface. The protein localises to the desmosome. It is found in the adherens junction. Functionally, calcium-dependent cell adhesion protein; preferentially mediates homotypic cell-cell adhesion by dimerization with a CDH2 chain from another cell. Cadherins may thus contribute to the sorting of heterogeneous cell types. Acts as a regulator of neural stem cells quiescence by mediating anchorage of neural stem cells to ependymocytes in the adult subependymal zone: upon cleavage by MMP24, CDH2-mediated anchorage is affected, leading to modulate neural stem cell quiescence. Plays a role in cell-to-cell junction formation between pancreatic beta cells and neural crest stem (NCS) cells, promoting the formation of processes by NCS cells. Required for proper neurite branching. Required for pre- and postsynaptic organization. CDH2 may be involved in neuronal recognition mechanism. In hippocampal neurons, may regulate dendritic spine density. This chain is Cadherin-2 (CDH2), found in Otolemur garnettii (Small-eared galago).